We begin with the raw amino-acid sequence, 259 residues long: 4-hydroxy-tetrahydrodipicolinate reductase (259 aa).

G9–M14 is an NAD(+) binding site. NADP(+) is bound at residue R37. Residues G92–T94 and A116–M119 contribute to the NAD(+) site. H149 serves as the catalytic Proton donor/acceptor. H150 serves as a coordination point for (S)-2,3,4,5-tetrahydrodipicolinate. Residue K153 is the Proton donor of the active site. Residue G159–T160 coordinates (S)-2,3,4,5-tetrahydrodipicolinate.

It belongs to the DapB family.

It localises to the cytoplasm. It carries out the reaction (S)-2,3,4,5-tetrahydrodipicolinate + NAD(+) + H2O = (2S,4S)-4-hydroxy-2,3,4,5-tetrahydrodipicolinate + NADH + H(+). The enzyme catalyses (S)-2,3,4,5-tetrahydrodipicolinate + NADP(+) + H2O = (2S,4S)-4-hydroxy-2,3,4,5-tetrahydrodipicolinate + NADPH + H(+). Its pathway is amino-acid biosynthesis; L-lysine biosynthesis via DAP pathway; (S)-tetrahydrodipicolinate from L-aspartate: step 4/4. Functionally, catalyzes the conversion of 4-hydroxy-tetrahydrodipicolinate (HTPA) to tetrahydrodipicolinate. In Desulfovibrio desulfuricans (strain ATCC 27774 / DSM 6949 / MB), this protein is 4-hydroxy-tetrahydrodipicolinate reductase.